A 284-amino-acid chain; its full sequence is Efem/EfeO family lipoprotein (284 aa).

The first 17 residues, 1 to 17, serve as a signal peptide directing secretion; that stretch reads MKKLTTLLLASTLLIAA. Cysteine 18 carries N-palmitoyl cysteine lipidation. Cysteine 18 carries S-diacylglycerol cysteine lipidation.

It belongs to the EfeM/EfeO family.

It localises to the cell membrane. This chain is Efem/EfeO family lipoprotein, found in Staphylococcus aureus (strain MRSA252).